Reading from the N-terminus, the 74-residue chain is ATP synthase subunit c (74 aa).

Helical transmembrane passes span leucine 5–glycine 25 and leucine 49–leucine 69.

This sequence belongs to the ATPase C chain family. F-type ATPases have 2 components, F(1) - the catalytic core - and F(0) - the membrane proton channel. F(1) has five subunits: alpha(3), beta(3), gamma(1), delta(1), epsilon(1). F(0) has three main subunits: a(1), b(2) and c(10-14). The alpha and beta chains form an alternating ring which encloses part of the gamma chain. F(1) is attached to F(0) by a central stalk formed by the gamma and epsilon chains, while a peripheral stalk is formed by the delta and b chains.

The protein resides in the cell inner membrane. Its function is as follows. F(1)F(0) ATP synthase produces ATP from ADP in the presence of a proton or sodium gradient. F-type ATPases consist of two structural domains, F(1) containing the extramembraneous catalytic core and F(0) containing the membrane proton channel, linked together by a central stalk and a peripheral stalk. During catalysis, ATP synthesis in the catalytic domain of F(1) is coupled via a rotary mechanism of the central stalk subunits to proton translocation. Functionally, key component of the F(0) channel; it plays a direct role in translocation across the membrane. A homomeric c-ring of between 10-14 subunits forms the central stalk rotor element with the F(1) delta and epsilon subunits. The chain is ATP synthase subunit c from Ruegeria pomeroyi (strain ATCC 700808 / DSM 15171 / DSS-3) (Silicibacter pomeroyi).